We begin with the raw amino-acid sequence, 509 residues long: Sensor histidine kinase TrcS (509 aa).

Helical transmembrane passes span 24–44 and 188–208; these read LLLG…VVSV and VALV…VVGY. The 63-residue stretch at 207-269 folds into the HAMP domain; the sequence is GYALRPLRRV…LLDNVDGALA (63 aa). The Histidine kinase domain occupies 284-502; sequence DASHELRTPL…VFRVRLPMIE (219 aa). His287 is modified (phosphohistidine; by autocatalysis).

A divalent metal cation is required as a cofactor. Autophosphorylated.

It is found in the cell membrane. The enzyme catalyses ATP + protein L-histidine = ADP + protein N-phospho-L-histidine.. In terms of biological role, member of the two-component regulatory system TrcS/TrcR. Phosphorylates TrcR. The TrcR-TrcS regulatory system may act as a transition regulatory system involved in adapting to an intracellular environment and transitioning from latency to reactivation. This Mycobacterium tuberculosis (strain ATCC 25618 / H37Rv) protein is Sensor histidine kinase TrcS.